Reading from the N-terminus, the 338-residue chain is Popeye domain-containing protein 1-A (338 aa).

Residues 1–40 (MTTESIFITTLPMDFNSQFDNITIGLNDNETLCENWREIH) are Extracellular-facing. N-linked (GlcNAc...) asparagine glycosylation is found at asparagine 21 and asparagine 29. A helical transmembrane segment spans residues 41–61 (HLVFHLANTCFAAGLVIPSTL). The Cytoplasmic portion of the chain corresponds to 62 to 65 (NLHM). A helical membrane pass occupies residues 66-86 (LFLRGMLCLGCTFFIIWAVLF). The Extracellular segment spans residues 87–91 (RCALD). A helical membrane pass occupies residues 92 to 112 (IMIWNATFLSINFMHFVYLVY). The Cytoplasmic portion of the chain corresponds to 113–338 (KKRPIKIKKE…VGPLSHAVFC (226 aa)). Residues 296 to 317 (TNDNEDGLQNFLRGTSTTSSQR) are disordered. Over residues 307-317 (LRGTSTTSSQR) the composition is skewed to polar residues.

The protein belongs to the popeye family. In terms of tissue distribution, expressed in the heart.

Its subcellular location is the lateral cell membrane. It localises to the cell junction. The protein localises to the tight junction. The protein resides in the membrane. In terms of biological role, cell adhesion molecule involved in the establishment and/or maintenance of cell integrity. Plays a role in vamp3-mediated vesicular transport and recycling of different receptor molecules. May be involved in the formation and regulation of the tight junction (TJ) paracellular permeability barrier in epithelial cells. May induce primordial adhesive contact and aggregation of epithelial cells in a Ca(2+)-independent manner. May be involved in epithelial movement during corneal sheet formation and regeneration. May play a role in the regulation of cell shape and movement by modulating the Rho-GTPase activity. May also be involved in striated muscle regeneration and in the regulation of cell spreading. This chain is Popeye domain-containing protein 1-A (popdc1-a), found in Xenopus laevis (African clawed frog).